The chain runs to 44 residues: Protein PsbN (44 aa).

The chain crosses the membrane as a helical span at residues 6-26 (FFFTIFVWFLLISVTGYSIYV).

The protein belongs to the PsbN family.

The protein resides in the plastid. Its subcellular location is the chloroplast thylakoid membrane. Functionally, may play a role in photosystem I and II biogenesis. The sequence is that of Protein PsbN from Bigelowiella natans (Pedinomonas minutissima).